A 236-amino-acid polypeptide reads, in one-letter code: uncharacterized protein (236 aa).

The N-terminal stretch at 1–22 is a signal peptide; that stretch reads MEFKMQKIILGMLVVTASNAMA.

This is an uncharacterized protein from Pasteurella multocida (strain Pm70).